A 121-amino-acid polypeptide reads, in one-letter code: MSSSFFCFFLFCFQTCLIQNVYSQCLGRVGPGGPPLGPYGGPLGGPGYGPVGYGGCGGYGGSGIGNVAVAGELPVAGSAAVLGQVPVIGAVEFAGPACAVGSVSISGACGPTCGCGGSPYY.

The signal sequence occupies residues 1 to 23 (MSSSFFCFFLFCFQTCLIQNVYS). A left arm region spans residues 24–57 (QCLGRVGPGGPPLGPYGGPLGGPGYGPVGYGGCG). Positions 58–105 (GYGGSGIGNVAVAGELPVAGSAAVLGQVPVIGAVEFAGPACAVGSVSI) are central domain. A right arm region spans residues 106–121 (SGACGPTCGCGGSPYY).

It belongs to the chorion protein family.

Its function is as follows. This protein is one of many from the eggshell of the silk moth. The sequence is that of Chorion class CA protein ERA.4 (ERA.4) from Bombyx mori (Silk moth).